We begin with the raw amino-acid sequence, 157 residues long: Pyruvoyl-dependent arginine decarboxylase 2 (157 aa).

Pyruvic acid (Ser) is present on S43.

This sequence belongs to the PdaD family. The cofactor is pyruvate.

It carries out the reaction L-arginine + H(+) = agmatine + CO2. The protein is Pyruvoyl-dependent arginine decarboxylase 2 (pdaD2) of Archaeoglobus fulgidus (strain ATCC 49558 / DSM 4304 / JCM 9628 / NBRC 100126 / VC-16).